We begin with the raw amino-acid sequence, 151 residues long: Regulatory protein RecX (151 aa).

Belongs to the RecX family.

The protein resides in the cytoplasm. Functionally, modulates RecA activity. In Herminiimonas arsenicoxydans, this protein is Regulatory protein RecX.